The sequence spans 1521 residues: Protein OPAQUE1 (1521 aa).

The 50-residue stretch at 4–53 folds into the Myosin N-terminal SH3-like domain; that stretch reads RKGLKVWVEEKGEGWVEAEVVEAKERAVVVFSSQRKKITVSPEKLLPRDT. The Myosin motor domain occupies 60 to 731; that stretch reads GHVDDMTKLT…QIAILDMRRA (672 aa). ATP is bound by residues 155-162 and 208-216; these read GESGAGKT and NDNSSRFGK. Actin-binding regions lie at residues 493 to 527, 529 to 552, 587 to 612, and 612 to 634; these read LIEK…FRNF, SHLR…AGKV, FTSL…KLQL, and LQAL…KPNS. 6 IQ domains span residues 733 to 755, 756 to 778, 781 to 803, 804 to 826, 829 to 851, and 852 to 874; these read ILDN…KEFV, KTRE…KMFA, RETA…RAHL, QACL…RYFS, REHK…ILFQ, and NYRQ…KELR. Coiled coils occupy residues 870 to 910 and 974 to 1050; these read RKEL…ERRL and SAEA…LRQK. Residues 1162-1459 form the Dilute domain; the sequence is DHVIEAINDV…VAAMREMVNK (298 aa).

This sequence belongs to the TRAFAC class myosin-kinesin ATPase superfamily. Myosin family. Plant myosin class XI subfamily. Interacts (via C-terminus) with HIP (via C-terminus), but not with zeins, FL1 or intrinsic proteins of protein bodies. As to expression, high expression in kernels and stems, intermediate in ears and leaves, and low in roots, silks and tassels.

It is found in the cytoplasm. In terms of biological role, myosin XI motor protein required for endoplasmic reticulum motility and protein body formation. May function by binding with its tail domain to receptor proteins on membranes and exerting force with its N-terminal motor domain against actin filaments, thereby transporting its cargo along polarized actin cables. This chain is Protein OPAQUE1, found in Zea mays (Maize).